The primary structure comprises 208 residues: Small ribosomal subunit protein uS4 (208 aa).

The S4 RNA-binding domain occupies 95–159; sequence RRIDNIVYRA…FKKLVRSNIE (65 aa).

This sequence belongs to the universal ribosomal protein uS4 family. In terms of assembly, part of the 30S ribosomal subunit. Contacts protein S5. The interaction surface between S4 and S5 is involved in control of translational fidelity.

Functionally, one of the primary rRNA binding proteins, it binds directly to 16S rRNA where it nucleates assembly of the body of the 30S subunit. In terms of biological role, with S5 and S12 plays an important role in translational accuracy. The sequence is that of Small ribosomal subunit protein uS4 from Borrelia recurrentis (strain A1).